Reading from the N-terminus, the 348-residue chain is Isopentenyl-diphosphate delta-isomerase (348 aa).

5 to 6 (RK) provides a ligand contact to substrate. FMN contacts are provided by residues S61, 62–64 (SMT), S92, and N120. 92-94 (SMR) provides a ligand contact to substrate. Residue Q159 participates in substrate binding. Mg(2+) is bound at residue E160. FMN is bound by residues K189, S214, T219, 269–271 (GLR), and 290–291 (AR).

It belongs to the IPP isomerase type 2 family. As to quaternary structure, homooctamer. Dimer of tetramers. FMN serves as cofactor. NADPH is required as a cofactor. The cofactor is Mg(2+).

The protein resides in the cytoplasm. The catalysed reaction is isopentenyl diphosphate = dimethylallyl diphosphate. Its function is as follows. Involved in the biosynthesis of isoprenoids. Catalyzes the 1,3-allylic rearrangement of the homoallylic substrate isopentenyl (IPP) to its allylic isomer, dimethylallyl diphosphate (DMAPP). This chain is Isopentenyl-diphosphate delta-isomerase, found in Thermoplasma acidophilum (strain ATCC 25905 / DSM 1728 / JCM 9062 / NBRC 15155 / AMRC-C165).